Consider the following 258-residue polypeptide: UDP-2,3-diacylglucosamine hydrolase (258 aa).

Mn(2+) contacts are provided by D15, H17, D48, N88, and H123. Position 88-89 (88-89 (NR)) interacts with substrate. D131, S169, N173, K176, and H204 together coordinate substrate. Positions 204 and 206 each coordinate Mn(2+).

Belongs to the LpxH family. It depends on Mn(2+) as a cofactor.

The protein localises to the cell inner membrane. It carries out the reaction UDP-2-N,3-O-bis[(3R)-3-hydroxytetradecanoyl]-alpha-D-glucosamine + H2O = 2-N,3-O-bis[(3R)-3-hydroxytetradecanoyl]-alpha-D-glucosaminyl 1-phosphate + UMP + 2 H(+). Its pathway is glycolipid biosynthesis; lipid IV(A) biosynthesis; lipid IV(A) from (3R)-3-hydroxytetradecanoyl-[acyl-carrier-protein] and UDP-N-acetyl-alpha-D-glucosamine: step 4/6. Hydrolyzes the pyrophosphate bond of UDP-2,3-diacylglucosamine to yield 2,3-diacylglucosamine 1-phosphate (lipid X) and UMP by catalyzing the attack of water at the alpha-P atom. Involved in the biosynthesis of lipid A, a phosphorylated glycolipid that anchors the lipopolysaccharide to the outer membrane of the cell. The protein is UDP-2,3-diacylglucosamine hydrolase of Bordetella bronchiseptica (strain ATCC BAA-588 / NCTC 13252 / RB50) (Alcaligenes bronchisepticus).